A 151-amino-acid polypeptide reads, in one-letter code: MFEDKRERPRTLHELCEALNVSMHNIQVVCVYCKKELCRADVYNVAFTEIKIVYRDNNPYAVCKQCLLFYSKIREYRRYSRSVYGTTLEAITKKSLYDLSIRCHRCQRPLGPEEKQKLVDEKKRFHEIAGRWTGQCANCWQRTRQRNETQV.

2 zinc fingers span residues 30-66 (CVYC…CKQC) and 103-139 (CHRC…CANC). A PDZ-binding domain motif is present at residues 149-151 (TQV).

This sequence belongs to the papillomaviridae E6 protein family. Forms homodimers. Interacts with ubiquitin-protein ligase UBE3A/E6-AP and thus forms a complex with human TP53. Interacts with human NFX1 and MAGI3. Interacts with human IRF3; this interaction inhibits the establishment of antiviral state. Interacts with human TYK2; this interaction inhibits JAK-STAT activation by interferon alpha. Interacts with host DLG1; this interaction leads to the proteasomal degradation of DLG1.

The protein resides in the host cytoplasm. It is found in the host nucleus. Its function is as follows. Plays a major role in the induction and maintenance of cellular transformation. Acts mainly as an oncoprotein by stimulating the destruction of many host cell key regulatory proteins. E6 associates with host UBE3A/E6-AP ubiquitin-protein ligase, and inactivates tumor suppressors TP53 and TP73 by targeting them to the 26S proteasome for degradation. In turn, DNA damage and chromosomal instabilities increase and lead to cell proliferation and cancer development. The complex E6/E6AP targets several other substrates to degradation via the proteasome including host DLG1 or NFX1, a repressor of human telomerase reverse transcriptase (hTERT). The resulting increased expression of hTERT prevents the shortening of telomere length leading to cell immortalization. Other cellular targets including BAK1, Fas-associated death domain-containing protein (FADD) and procaspase 8, are degraded by E6/E6AP causing inhibition of apoptosis. E6 also inhibits immune response by interacting with host IRF3 and TYK2. These interactions prevent IRF3 transcriptional activities and inhibit TYK2-mediated JAK-STAT activation by interferon alpha resulting in inhibition of the interferon signaling pathway. This chain is Protein E6, found in Human papillomavirus 51.